A 246-amino-acid polypeptide reads, in one-letter code: Uridylate kinase (246 aa).

13–16 (KLSG) contributes to the ATP binding site. UMP is bound at residue G54. Residues G55 and R59 each contribute to the ATP site. UMP contacts are provided by residues D74 and 135 to 142 (AGMPYFST). ATP contacts are provided by N163, Y169, and D172.

The protein belongs to the UMP kinase family. Homohexamer.

Its subcellular location is the cytoplasm. It catalyses the reaction UMP + ATP = UDP + ADP. It functions in the pathway pyrimidine metabolism; CTP biosynthesis via de novo pathway; UDP from UMP (UMPK route): step 1/1. Its activity is regulated as follows. Inhibited by UTP. Catalyzes the reversible phosphorylation of UMP to UDP. In Bifidobacterium longum (strain NCC 2705), this protein is Uridylate kinase.